Here is a 603-residue protein sequence, read N- to C-terminus: MLSVIRVHLPSEIPIVGCELTPYVLVRRPDKNSTTDDVPESAPLEGYFLRYRWYRVQSDKKVTICSVHPTEQATLQCVFCSKRRSLVPKSYHCSPKCFTDAWQHHRTLHERAAAENNANEDDDLNRNNSAGSGSLAGSLSGSMSNLSIANNGPAPFYPSNITQKNGGETLVEVGGCKTYTPTADDISHVLKFECVVANAETKQIVGHPSTILTSRVIPAPSPSPRKLIPVNGADGMGHLDQDARIQSAGSFTVLSYNILSDTSASSDLYSYCPPWALSWPYRRQNLLREIVGYRADVVCLQEVQSDHFHEIFAPELDKHGYQALYKRKTNEVLSGSTSAIDGCATFFRRDRFSHVKKYDVEFNKAAQSLTDALIPQAQKRTALNRLVKDNIALIVVLEAKFGNQPTDPSGKRQLICVANTHVNVQQDLKDVKLWQVHTLLKGLEKIAASADIPMLVCGDFNTLPGSAPHTLLVMGKVDPMHPDLAVDPLNILRPHTKLTHQLPLVSAYSSFVRKGIMGLGLEQHRRRIDLNTNEPLFTNCTRDFIGTHDYIFYTADTLMVESLLELLDEDGLRKDTALPSPEWSSNHIALLAEFRCTPRTRRG.

The tract at residues 115-136 (ENNANEDDDLNRNNSAGSGSLA) is disordered. Over residues 126 to 136 (RNNSAGSGSLA) the composition is skewed to low complexity. Glutamate 302 is a Mg(2+) binding site.

Belongs to the CCR4/nocturin family. As to quaternary structure, component of the CCR4-NOT complex, at least composed of CRR4 and CAF1 proteins. The cofactor is Mg(2+).

It is found in the nucleus. The protein localises to the cytoplasm. It carries out the reaction Exonucleolytic cleavage of poly(A) to 5'-AMP.. In terms of biological role, acts as a catalytic component of the CCR4-NOT core complex, which in the nucleus seems to be a general transcription factor, and in the cytoplasm the major mRNA deadenylase involved in mRNA turnover. This chain is Carbon catabolite repressor protein 4 homolog 2 (CCR4-2), found in Arabidopsis thaliana (Mouse-ear cress).